Reading from the N-terminus, the 341-residue chain is MKALSKLHAKPGIWMTDVEKPECGYNDLLIKIKKTAICGTDVHIYKWDDWSQKTIPVPMVVGHEYVGEVAAMGDGVRGFEIGDRVSGEGHITCGHCRNCRAGRRHLCRNTYGVGVNRPGAFAEYLALPAENAFKLPDDVTDEMAAVFDPFGNAVHTALAFDLVGEDVLITGAGPIGIMAAAVARHVGARHVVITDVNEYRLDLARKMGVTRAVDVSKEKLSDVMTELGMKEGFDVGLEMSGVPSAFSQMLETMNHGGKIAMLGIPPENIAIDWNQVIFKGLVIKGIYGREMFETWYKMASLLQSGLDISPILTHEMPIDDFEKGFETMISGQSGKVILNWD.

Cys38 is a binding site for Zn(2+). Residues Thr40 and His43 each act as charge relay system in the active site. Zn(2+) contacts are provided by His63, Glu64, Cys93, Cys96, Cys99, and Cys107. Residues Ile175, Asp195, Arg200, 262 to 264, and 286 to 287 contribute to the NAD(+) site; these read LGI and IY.

It belongs to the zinc-containing alcohol dehydrogenase family. As to quaternary structure, homotetramer. It depends on Zn(2+) as a cofactor.

It is found in the cytoplasm. The catalysed reaction is L-threonine + NAD(+) = (2S)-2-amino-3-oxobutanoate + NADH + H(+). Its pathway is amino-acid degradation; L-threonine degradation via oxydo-reductase pathway; glycine from L-threonine: step 1/2. Catalyzes the NAD(+)-dependent oxidation of L-threonine to 2-amino-3-ketobutyrate. In Idiomarina loihiensis (strain ATCC BAA-735 / DSM 15497 / L2-TR), this protein is L-threonine 3-dehydrogenase.